We begin with the raw amino-acid sequence, 244 residues long: Prolactin-7D1 (244 aa).

An N-terminal signal peptide occupies residues 1–30; it reads MLPSLIQPCSSGTLLMLLMSNLFLWEKVSS. 2 disulfides stabilise this stretch: Cys-99/Cys-215 and Cys-232/Cys-240.

It belongs to the somatotropin/prolactin family.

The protein localises to the secreted. The chain is Prolactin-7D1 (Prl7d1) from Mus musculus (Mouse).